Here is a 404-residue protein sequence, read N- to C-terminus: Cysteine desulfurase IscS (404 aa).

Residues 75–76 (AT), Asn-155, Gln-183, and 203–205 (SAH) contribute to the pyridoxal 5'-phosphate site. Position 206 is an N6-(pyridoxal phosphate)lysine (Lys-206). Thr-243 serves as a coordination point for pyridoxal 5'-phosphate. Catalysis depends on Cys-328, which acts as the Cysteine persulfide intermediate. Cys-328 serves as a coordination point for [2Fe-2S] cluster.

This sequence belongs to the class-V pyridoxal-phosphate-dependent aminotransferase family. NifS/IscS subfamily. Homodimer. Forms a heterotetramer with IscU, interacts with other sulfur acceptors. Requires pyridoxal 5'-phosphate as cofactor.

It localises to the cytoplasm. The enzyme catalyses (sulfur carrier)-H + L-cysteine = (sulfur carrier)-SH + L-alanine. The protein operates within cofactor biosynthesis; iron-sulfur cluster biosynthesis. Its function is as follows. Master enzyme that delivers sulfur to a number of partners involved in Fe-S cluster assembly, tRNA modification or cofactor biosynthesis. Catalyzes the removal of elemental sulfur atoms from cysteine to produce alanine. Functions as a sulfur delivery protein for Fe-S cluster synthesis onto IscU, an Fe-S scaffold assembly protein, as well as other S acceptor proteins. The polypeptide is Cysteine desulfurase IscS (Buchnera aphidicola subsp. Acyrthosiphon pisum (strain 5A)).